Here is a 204-residue protein sequence, read N- to C-terminus: dTTP/UTP pyrophosphatase (204 aa).

Aspartate 76 serves as the catalytic Proton acceptor.

The protein belongs to the Maf family. YhdE subfamily. Requires a divalent metal cation as cofactor.

The protein resides in the cytoplasm. The catalysed reaction is dTTP + H2O = dTMP + diphosphate + H(+). The enzyme catalyses UTP + H2O = UMP + diphosphate + H(+). Nucleoside triphosphate pyrophosphatase that hydrolyzes dTTP and UTP. May have a dual role in cell division arrest and in preventing the incorporation of modified nucleotides into cellular nucleic acids. This Salinibacter ruber (strain DSM 13855 / M31) protein is dTTP/UTP pyrophosphatase.